A 69-amino-acid chain; its full sequence is Sec-independent protein translocase protein TatA (69 aa).

A helical membrane pass occupies residues 1–21 (MFGLGGQELVLILLIILLLFG). Residues 48–69 (EELNKAVDDTPEKEKKSSSEKS) are disordered.

Belongs to the TatA/E family. Forms a complex with TatC.

The protein localises to the cell inner membrane. Its function is as follows. Part of the twin-arginine translocation (Tat) system that transports large folded proteins containing a characteristic twin-arginine motif in their signal peptide across membranes. TatA could form the protein-conducting channel of the Tat system. The chain is Sec-independent protein translocase protein TatA from Chlorobium phaeobacteroides (strain BS1).